A 146-amino-acid chain; its full sequence is Snaclec mucetin subunit beta (146 aa).

An N-terminal signal peptide occupies residues 1 to 23; sequence MGRFIFVSFGLLVVFISLSGTEA. 3 disulfide bridges follow: cysteine 27-cysteine 38, cysteine 55-cysteine 144, and cysteine 121-cysteine 136. The C-type lectin domain occupies 34–145; the sequence is YDEHCYQVFQ…CSSKRYVVCK (112 aa).

It belongs to the snaclec family. In terms of assembly, dimer and tetramer of heterodimers of alpha and beta subunits ((alphabeta)(2) and (alphabeta)(4)); disulfide-linked. These two multimeric forms are found. The complex is glycosylated. As to expression, expressed by the venom gland.

The protein resides in the secreted. In terms of biological role, potent platelet activator that acts via GPIb (GP1BA/GP1BB). After activation by the toxin, the receptor is redistributed on platelet surface thanks to cytoskeletal translocation. The indirect activation of integrin alpha-IIb/beta-3 (ITGA2B/ITGB3) also induced by the toxin is downstream the cytoskeletal translocation of GPIb. This is Snaclec mucetin subunit beta from Protobothrops mucrosquamatus (Taiwan habu).